We begin with the raw amino-acid sequence, 127 residues long: DNA-directed RNA polymerase subunit omega (127 aa).

Belongs to the RNA polymerase subunit omega family. In terms of assembly, the RNAP catalytic core consists of 2 alpha, 1 beta, 1 beta' and 1 omega subunit. When a sigma factor is associated with the core the holoenzyme is formed, which can initiate transcription.

It catalyses the reaction RNA(n) + a ribonucleoside 5'-triphosphate = RNA(n+1) + diphosphate. Promotes RNA polymerase assembly. Latches the N- and C-terminal regions of the beta' subunit thereby facilitating its interaction with the beta and alpha subunits. This Rickettsia rickettsii (strain Iowa) protein is DNA-directed RNA polymerase subunit omega.